Consider the following 428-residue polypeptide: MQELLTLQPIVRVNGTIHLPGSKSISNRALLLAAQALGKTCLINLLDSYDVRYMLDALHKLGINYCLSIDRRSCEIDGIGRPLRVDTALELYLGNSGIALRSLVAALCLQNKNIIITGDKRMKNRPIGHLVDALRQGSAQIHYLEKDNYPPLLLQGGFYNGDITIDCSLSSQFLTSLLMMAPLASQDRCIFVKGRLVSKPYIDMTLAMMKSFGIVVQHDQYKIFYIKGKSQYRSPGHYLVEGDATNASYFLAAAAIRGGTVRVTGVGSNSIQGDIRFADILANMGAIIRWGVNYIECTRNSLCSIDIDMNALPDTAMTIAIVALFTYNGVTTLRNIYNWRIKETNRLVAMATELRKVGAIVVEGKEYLSIKPPNMFKIAKINTYDDHRIAMCFALVALSNVSITIVNPKCTYKTFPDFFKLLKGISIT.

The 3-phosphoshikimate site is built by Lys-23, Ser-24, and Arg-28. Lys-23 serves as a coordination point for phosphoenolpyruvate. Residues Gly-97 and Arg-125 each contribute to the phosphoenolpyruvate site. Ser-170, Ser-171, Gln-172, Ser-198, Asp-314, Asn-338, and Lys-342 together coordinate 3-phosphoshikimate. Gln-172 contacts phosphoenolpyruvate. The active-site Proton acceptor is Asp-314. Phosphoenolpyruvate contacts are provided by Arg-346, Arg-388, and Lys-413.

The protein belongs to the EPSP synthase family. In terms of assembly, monomer.

The protein localises to the cytoplasm. The catalysed reaction is 3-phosphoshikimate + phosphoenolpyruvate = 5-O-(1-carboxyvinyl)-3-phosphoshikimate + phosphate. Its pathway is metabolic intermediate biosynthesis; chorismate biosynthesis; chorismate from D-erythrose 4-phosphate and phosphoenolpyruvate: step 6/7. Catalyzes the transfer of the enolpyruvyl moiety of phosphoenolpyruvate (PEP) to the 5-hydroxyl of shikimate-3-phosphate (S3P) to produce enolpyruvyl shikimate-3-phosphate and inorganic phosphate. The chain is 3-phosphoshikimate 1-carboxyvinyltransferase from Baumannia cicadellinicola subsp. Homalodisca coagulata.